The following is a 663-amino-acid chain: Transmembrane 9 superfamily member 2 (663 aa).

An N-terminal signal peptide occupies residues 1-28; it reads MSSRPPASLPARGPRLLLLSLLLLGTVP. Residues 29–300 lie on the Lumenal side of the membrane; that stretch reads GPRPGSAFYL…LESMPHTHIQ (272 aa). A helical membrane pass occupies residues 301–321; it reads WFSIMNSLVIVLFLSGMVAMI. Topologically, residues 322-374 are cytoplasmic; it reads MLRTLHKDIARYNQMDSTEDAQEEFGWKLVHGDIFRPPRKGMLLSVFLGSGTQ. Residues 375-395 traverse the membrane as a helical segment; the sequence is ILIMTFVTLFFACLGFLSPAN. Topologically, residues 396–398 are lumenal; sequence RGA. A helical membrane pass occupies residues 399–419; that stretch reads LMTCAVVLWVLLGTPAGYVAA. The Cytoplasmic portion of the chain corresponds to 420 to 437; sequence RFYKSFGGEKWKTNVLLT. A helical membrane pass occupies residues 438 to 458; sequence SFLCPGIVFADFFIMNLILWG. Residues 459–466 are Lumenal-facing; it reads EGSSAAIP. The helical transmembrane segment at 467-487 threads the bilayer; the sequence is FGTLVAILALWFCISVPLTFI. Over 488-522 the chain is Cytoplasmic; sequence GAYFGFKKNAIEHPVRTNQIPRQIPEQSFYTKPLP. A helical membrane pass occupies residues 523–543; it reads GIIMGGILPFGCIFIQLFFIL. The Lumenal portion of the chain corresponds to 544–554; it reads NSIWSHQMYYM. A helical transmembrane segment spans residues 555-575; it reads FGFLFLVFIILVITCSEATIL. The Cytoplasmic portion of the chain corresponds to 576 to 591; that stretch reads LCYFHLCAEDYHWQWR. The chain crosses the membrane as a helical span at residues 592-612; sequence SFLTSGFTAVYFLVYAIHYFF. At 613-631 the chain is on the lumenal side; the sequence is SKLQITGTASTILYFGYTM. The chain crosses the membrane as a helical span at residues 632–652; that stretch reads IMVLIFFLFTGTIGFFACFWF. The Cytoplasmic segment spans residues 653–663; that stretch reads VTKIYSVVKVD.

This sequence belongs to the nonaspanin (TM9SF) (TC 9.A.2) family.

The protein resides in the endosome membrane. Its subcellular location is the golgi outpost. The protein localises to the cytoplasm. It is found in the cytoskeleton. It localises to the microtubule organizing center. Functionally, in the intracellular compartments, may function as a channel or small molecule transporter. This is Transmembrane 9 superfamily member 2 (Tm9sf2) from Rattus norvegicus (Rat).